We begin with the raw amino-acid sequence, 271 residues long: 4-hydroxy-tetrahydrodipicolinate reductase (271 aa).

Residues 10–15 (GAGGRM), Glu36, 100–102 (GTT), and 124–127 (SGNM) contribute to the NAD(+) site. His157 (proton donor/acceptor) is an active-site residue. A (S)-2,3,4,5-tetrahydrodipicolinate-binding site is contributed by His158. Lys161 serves as the catalytic Proton donor. Residue 167 to 168 (GT) participates in (S)-2,3,4,5-tetrahydrodipicolinate binding.

This sequence belongs to the DapB family.

It is found in the cytoplasm. The catalysed reaction is (S)-2,3,4,5-tetrahydrodipicolinate + NAD(+) + H2O = (2S,4S)-4-hydroxy-2,3,4,5-tetrahydrodipicolinate + NADH + H(+). It catalyses the reaction (S)-2,3,4,5-tetrahydrodipicolinate + NADP(+) + H2O = (2S,4S)-4-hydroxy-2,3,4,5-tetrahydrodipicolinate + NADPH + H(+). The protein operates within amino-acid biosynthesis; L-lysine biosynthesis via DAP pathway; (S)-tetrahydrodipicolinate from L-aspartate: step 4/4. Functionally, catalyzes the conversion of 4-hydroxy-tetrahydrodipicolinate (HTPA) to tetrahydrodipicolinate. The chain is 4-hydroxy-tetrahydrodipicolinate reductase from Rhodopseudomonas palustris (strain BisB5).